Reading from the N-terminus, the 217-residue chain is Growth hormone variant (217 aa).

The N-terminal stretch at 1-26 (MAAGSRTSLLLAFGLLCLPWLQEGSA) is a signal peptide. Cystine bridges form between C79/C191 and C208/C215. Position 132 is a phosphoserine (S132). Residue N166 is glycosylated (N-linked (GlcNAc...) asparagine). The residue at position 176 (S176) is a Phosphoserine.

Belongs to the somatotropin/prolactin family. As to expression, expressed in the placenta.

It is found in the secreted. Its function is as follows. Plays an important role in growth control. Its major role in stimulating body growth is to stimulate the liver and other tissues to secrete IGF1. It stimulates both the differentiation and proliferation of myoblasts. It also stimulates amino acid uptake and protein synthesis in muscle and other tissues. The polypeptide is Growth hormone variant (GH2) (Pan troglodytes (Chimpanzee)).